We begin with the raw amino-acid sequence, 469 residues long: Protein YfjI (469 aa).

The chain is Protein YfjI (yfjI) from Escherichia coli (strain K12).